A 210-amino-acid chain; its full sequence is Ovomucoid (210 aa).

The first 24 residues, 1–24 (MAMAGVFVLFSFVLCGFLPDAAFG), serve as a signal peptide directing secretion. 3 Kazal-like domains span residues 25–88 (AEVD…ECKE), 89–153 (TVPM…GCRK), and 156–210 (AAVS…FGKC). 3 disulfides stabilise this stretch: C29/C68, C46/C65, and C54/C86. Residue N34 is glycosylated (N-linked (GlcNAc...) asparagine). N-linked (GlcNAc...) asparagine glycosylation is found at N77, N93, and N99. Disulfide bonds link C94/C133, C111/C130, C119/C151, C162/C192, C170/C189, and C178/C210. N199 carries N-linked (GlcNAc...) asparagine; partial glycosylation.

Its subcellular location is the secreted. Functionally, serine protease inhibitor. Inhibits trypsin. The polypeptide is Ovomucoid (Gallus gallus (Chicken)).